The chain runs to 230 residues: Cytidylate kinase (230 aa).

12–20 (GPSGAGKGT) is a binding site for ATP.

This sequence belongs to the cytidylate kinase family. Type 1 subfamily.

The protein resides in the cytoplasm. It catalyses the reaction CMP + ATP = CDP + ADP. The catalysed reaction is dCMP + ATP = dCDP + ADP. The sequence is that of Cytidylate kinase from Shewanella putrefaciens (strain CN-32 / ATCC BAA-453).